Reading from the N-terminus, the 32-residue chain is Photosystem II reaction center protein Z (32 aa).

Residues 9-31 (FILLGAVTWAILVFIVGSLNSYV) traverse the membrane as a helical segment.

Belongs to the PsbZ family. As to quaternary structure, PSII is composed of 1 copy each of membrane proteins PsbA, PsbB, PsbC, PsbD, PsbE, PsbF, PsbH, PsbI, PsbJ, PsbK, PsbL, PsbM, PsbT, PsbY, PsbZ, Psb30/Ycf12, at least 3 peripheral proteins of the oxygen-evolving complex and a large number of cofactors. It forms dimeric complexes.

It is found in the plastid. Its subcellular location is the chloroplast thylakoid membrane. Its function is as follows. May control the interaction of photosystem II (PSII) cores with the light-harvesting antenna, regulates electron flow through the 2 photosystem reaction centers. PSII is a light-driven water plastoquinone oxidoreductase, using light energy to abstract electrons from H(2)O, generating a proton gradient subsequently used for ATP formation. This Euglena stellata protein is Photosystem II reaction center protein Z.